We begin with the raw amino-acid sequence, 143 residues long: Glycine cleavage system H protein 1 (143 aa).

In terms of domain architecture, Lipoyl-binding spans 26–107; it reads IYSVGMASIL…PYSSWIAKLK (82 aa). The residue at position 67 (K67) is an N6-lipoyllysine.

This sequence belongs to the GcvH family. As to quaternary structure, the glycine cleavage system is composed of four proteins: P, T, L and H. (R)-lipoate serves as cofactor.

Functionally, the glycine cleavage system catalyzes the degradation of glycine. The H protein shuttles the methylamine group of glycine from the P protein to the T protein. The sequence is that of Glycine cleavage system H protein 1 from Aquifex aeolicus (strain VF5).